Consider the following 159-residue polypeptide: MGRFLFVASSACWFVFLSLSGAKGNNCPQDWLPMNGLCYKIFNELKAWKDAEMFCRKYKPGCHLASIHLYGESPEIAEYISDYHKGQSEVWIGLCDKKKDFSWEWTDRSCTDYLSWDKNQPDHYQNKEFCVELVSNTGYRLWNDQVCESKNAFLCQCKF.

An N-terminal signal peptide occupies residues 1–24 (MGRFLFVASSACWFVFLSLSGAKG). 4 cysteine pairs are disulfide-bonded: Cys-27–Cys-38, Cys-55–Cys-155, Cys-62–Cys-157, and Cys-130–Cys-147. Residues 34 to 156 (MNGLCYKIFN…CESKNAFLCQ (123 aa)) form the C-type lectin domain. Gln-120, Asp-122, Glu-128, Asn-143, and Asp-144 together coordinate Ca(2+). Positions 120-122 (QPD) match the Galactose-binding motif.

This sequence belongs to the true venom lectin family. In terms of assembly, homodecamer of disulfide-linked dimers arranged in two 5-fold symmetric pentamers. Binds the gentamicin group of aminoglycoside antibiotics at the dimeric interface near the intermolecular disulfide bond. Expressed by the venom gland.

Its subcellular location is the secreted. Hemagglutination activity is inhibited by lactose (MIC=2.5 mM), galactose (MIC=10 mM), and raffinose. Is very weakly or not inhibited by gentamicin, kanamycin, glucose and sucrose. In terms of biological role, galactose-binding lectin which recognizes specific carbohydrate structures and agglutinates a variety of animal cells by binding to cell-surface glycoproteins and glycolipids. Calcium-dependent lectin. Also binds lactose and raffinose. Shows high hemagglutinating activity on mammalian erythrocytes. It also involved in immunological functions, since it is able of inducing potent neutrophil activation. In vivo, it causes edema and increases vascular permeability after injection into mouse hind paws (10-100 ug/paw). In anesthetized rats, it decreases the blood pressure by approximately 15%, with a rapid return to the resting level. Is an effective inhibitor of cell growth in some cancer cell lines, especially against renal and pancreatic cancer cell lines, human breast and ovarian carcinoma, glioblastoma and a bovine brain microvascular endothelial cell line. The polypeptide is C-type lectin BJcuL (Bothrops jararacussu (Jararacussu)).